The sequence spans 119 residues: Large ribosomal subunit protein uL18 (119 aa).

It belongs to the universal ribosomal protein uL18 family. In terms of assembly, part of the 50S ribosomal subunit; part of the 5S rRNA/L5/L18/L25 subcomplex. Contacts the 5S and 23S rRNAs.

Its function is as follows. This is one of the proteins that bind and probably mediate the attachment of the 5S RNA into the large ribosomal subunit, where it forms part of the central protuberance. This chain is Large ribosomal subunit protein uL18, found in Ruegeria pomeroyi (strain ATCC 700808 / DSM 15171 / DSS-3) (Silicibacter pomeroyi).